The chain runs to 548 residues: Glutamate--tRNA ligase (548 aa).

A 'HIGH' region motif is present at residues 102 to 112; the sequence is PSPSGPLHIGH.

This sequence belongs to the class-I aminoacyl-tRNA synthetase family. Glutamate--tRNA ligase type 2 subfamily.

Its subcellular location is the cytoplasm. The enzyme catalyses tRNA(Glu) + L-glutamate + ATP = L-glutamyl-tRNA(Glu) + AMP + diphosphate. Its function is as follows. Catalyzes the attachment of glutamate to tRNA(Glu) in a two-step reaction: glutamate is first activated by ATP to form Glu-AMP and then transferred to the acceptor end of tRNA(Glu). In Thermoplasma volcanium (strain ATCC 51530 / DSM 4299 / JCM 9571 / NBRC 15438 / GSS1), this protein is Glutamate--tRNA ligase.